Here is a 66-residue protein sequence, read N- to C-terminus: Protein I177L (66 aa).

The protein belongs to the asfivirus I177L family.

Its subcellular location is the virion. The protein is Protein I177L of Ornithodoros (relapsing fever ticks).